The following is a 212-amino-acid chain: Nitrile hydratase subunit beta (212 aa).

This sequence belongs to the nitrile hydratase subunit beta family. Heterodimer of an alpha and a beta chain.

It carries out the reaction an aliphatic primary amide = an aliphatic nitrile + H2O. Functionally, NHase catalyzes the hydration of various nitrile compounds to the corresponding amides. The chain is Nitrile hydratase subunit beta (nthB) from Rhodococcus erythropolis (Arthrobacter picolinophilus).